The chain runs to 184 residues: Photosystem I assembly protein Ycf4 (184 aa).

2 helical membrane passes run 22–42 (FFWACILFLGSLGFLVVGTSS) and 57–77 (ISFFPQGIVMSFYGIAGLFIS).

Belongs to the Ycf4 family.

It is found in the plastid. The protein localises to the chloroplast thylakoid membrane. In terms of biological role, seems to be required for the assembly of the photosystem I complex. This Lemna minor (Common duckweed) protein is Photosystem I assembly protein Ycf4.